A 584-amino-acid chain; its full sequence is DNA mismatch repair protein MutL (584 aa).

This sequence belongs to the DNA mismatch repair MutL/HexB family.

Functionally, this protein is involved in the repair of mismatches in DNA. It is required for dam-dependent methyl-directed DNA mismatch repair. May act as a 'molecular matchmaker', a protein that promotes the formation of a stable complex between two or more DNA-binding proteins in an ATP-dependent manner without itself being part of a final effector complex. This chain is DNA mismatch repair protein MutL, found in Syntrophomonas wolfei subsp. wolfei (strain DSM 2245B / Goettingen).